We begin with the raw amino-acid sequence, 2021 residues long: MELEERGLQLLDVAELEEPQRGLRVLEWLRHLRRVLPVITRAEIKENQKQLVEQLLLVMMGFPGPPARRLLAYNMAFVYSSGDTFSVYETIDRCNDVIRSKDDSPSYLPSKLAAVACLGALYQKLGRLLGSTFSDTVSNLLKVLRSAESQGRSEIMLSLERILKGLGSAAIPCHRDIYKAARSCLTDRSMSVRCSAAQCLLALQKEASFMWGSDLESLASICFKAFEGSSYEVRLAVARLLGKVLARAMQGATSPRQNARKLSLQEVLGLLSTGFLRGNSGFLRGGGDMLGGTSVTTRHVRLGATQAYIVFIRTLGGHWLARNVPVLLSHSLELISNPKAIQNPTDAACSRCCISYILRATVGELLGEKAQLEAAREICEVIRKLMKTVDAVLSDSNLETRFCTTDISASQHVLVCALQELGDLFLGLGTILAPLLKDSSAGVLDTVLSVSLHPSLSARLAAAWCLRSVIVSLPSLAAPVLDRCVERLTALKSSPEAVSGYSLTAAVLLGSIRLCPLGVPHGKGKVVMSLAKDLLCTASQNSRFSLQRTQAGWLLIASLMTLGPAVVQSQLGCLLLLWRSVFPVTPKDLDTERRRGDAFTWQVTLEGRAGALGAMRSFVSHCGELMSEEVLQRLLPPLPCAIALLTLLPSLQKLYGNSLKACSVLYRQRLYQLLVLLPPKTYEESFCAVMKELVADLTSPDYSPGGAAFLLSSVCHPDDLVLLGPSFQECDQRATEEELLLSSGIPGGSLEYDLHAIYELPSEGESVPKPLPSAFTVIQAASLLFGTLLAHMPESQRPQILQQLVESIKQTKGSRQQSVQLCAMSSLCNFLKHLASSRSNLGPEEMRKPCLSLIQAVLEGNSLWLRCAGVESVARLVQVVDDPTFTAGLIQASFDKLKTARDVVARTSHSLVLGTLHRYLGGINSSQHLASCVGVLHSLSQDTTSPEVQTWALHSLSVITDLSGPLFNVHIEATLSLLLTALITTSPSHPEVHRSLGRCLSALVTALGPELQGNGAVLSSQRTSCLLACSVMQENPDCLVQAQGISCLQQLHMYAPKHVNLSSLVPTLCVHLYSPHLPLRRAVLACLRQLAQREAAEVSEHAMTVAKEGHEDLKMEMNMRELGLEGVLLSLLDRESDQQLLRDVKETLLHMQNCTGLSRLSFWLRMLKDILSASADFAAVASVDTNQEDEGEVACSDSVLTSSKAESLGSSVTPHWKTRIFAMECVCQLITQCELDGGAHFDMAQAQEMKHKEPERDFLVLHLQDLIRMSFMAATDHSEQLRLVGLQALLLVIHRFAAVPEPEFPGHLILEQFQANVLAAVRPAFNTDTPPDVTARACEVCSAWLASGVVKELADLQRVQQLLLTSLRRVQVAKETASVYSESTTAMESLAVLKAWAEVYIAAMEKQVTQSKMAEAQNEVLLSLVQAELLTLSGLWLAALQDHALLTLPAACASQLPSQGGGFYTAETSDAARPHYLLSWAPILHASSLWLSSSGFVLPDQDEGNGHLSRPVTPTSMGQERGSQLPADSPEDLNLERFHLILGISVEFLCCPPVDAPMERITSCLRALKALLSGMWPKAHIGTDQDLAIELISVLHRLLLMRESSEVQLLVLEVGRLIVNAAQDHVRERRRSAEVDDGAEEKETLPVFGEGHDTGGLVPGHSLVVAALELCLCILIRQLPQLSPHLSGGSVVGKTEPLFSEARLLVASSLGILAELPSLCSPEGSVSVLPTLLYLVVGVLQDTTVKFPDGHLTLPVTAALQALKVIVSSPMSQVEKCRASWTRLMQSAVSTLLNSWHLERQLVPDSVSLLTALTIFLLSANPEVMSDPGLQNACVQRFQNSIDSKNPTEQLKCYRLLLSIFKHPVPEVVAPYVCSLAPRIMRHLSQAESRKPQSMEELLVLQEGVNLLKTLVSAVEEQNRPSMVCMLLHLLISFLLDENALGSAPHYSRALHDFGLHSLTSFGASYPTQFRKLMGSSPALRSRLEAALRGNQESLKPKAPSRGTMGGGHGSPSIQLKTNFL.

2 HEAT repeats span residues 795 to 836 (SQRP…HLAS) and 1059 to 1096 (VNLS…REAA). Disordered stretches follow at residues 1503–1528 (EGNG…LPAD) and 1989–2012 (RGNQ…HGSP). Residues 1512–1522 (VTPTSMGQERG) are compositionally biased toward polar residues.

Belongs to the HEATR5 family.

In Xenopus tropicalis (Western clawed frog), this protein is HEAT repeat-containing protein 5A (heatr5a).